The chain runs to 374 residues: DNA replication and repair protein RecF (374 aa).

Position 30-37 (30-37 (GNNAQGKS)) interacts with ATP.

This sequence belongs to the RecF family.

It is found in the cytoplasm. Its function is as follows. The RecF protein is involved in DNA metabolism; it is required for DNA replication and normal SOS inducibility. RecF binds preferentially to single-stranded, linear DNA. It also seems to bind ATP. This is DNA replication and repair protein RecF from Nostoc punctiforme (strain ATCC 29133 / PCC 73102).